The following is a 365-amino-acid chain: MTNQAEEKRILIMAGGTGGHVFPALAVAKYLSQQGWKVRWLGTAERMEARLVPQHGFDIDFIDIKGVRGNGLMRKLAAPFKIIRSVMQARAVIKKFKPHVVMGMGGFASGPGGVAAKLSGIPLVLHEQNAIPGMTNRLLSRIASEVLCAFDGTFTDIKAETVGNPIRKELIALGEKRKPVCDDDSLKVLVVGGSLGAKIFNDVMPSVLEGVSKTHSMTVWHQVGRDNLATVKAEYQRLGQDGSVSVAEFIDDMEAAYRWADVVVCRSGALTVSELAAVGLPSLLVPYPHAVDDHQTKNAKVLVNAGAAFLLPQPIVDTSKLMTKLSMLASDKQELCNMGQRARDVAILDATQRVANVCIRLAEKG.

UDP-N-acetyl-alpha-D-glucosamine-binding positions include 17–19 (TGG), asparagine 129, arginine 167, serine 194, isoleucine 250, 269–274 (ALTVSE), and glutamine 295.

Belongs to the glycosyltransferase 28 family. MurG subfamily.

It is found in the cell inner membrane. It catalyses the reaction di-trans,octa-cis-undecaprenyl diphospho-N-acetyl-alpha-D-muramoyl-L-alanyl-D-glutamyl-meso-2,6-diaminopimeloyl-D-alanyl-D-alanine + UDP-N-acetyl-alpha-D-glucosamine = di-trans,octa-cis-undecaprenyl diphospho-[N-acetyl-alpha-D-glucosaminyl-(1-&gt;4)]-N-acetyl-alpha-D-muramoyl-L-alanyl-D-glutamyl-meso-2,6-diaminopimeloyl-D-alanyl-D-alanine + UDP + H(+). It participates in cell wall biogenesis; peptidoglycan biosynthesis. Functionally, cell wall formation. Catalyzes the transfer of a GlcNAc subunit on undecaprenyl-pyrophosphoryl-MurNAc-pentapeptide (lipid intermediate I) to form undecaprenyl-pyrophosphoryl-MurNAc-(pentapeptide)GlcNAc (lipid intermediate II). The chain is UDP-N-acetylglucosamine--N-acetylmuramyl-(pentapeptide) pyrophosphoryl-undecaprenol N-acetylglucosamine transferase from Shewanella halifaxensis (strain HAW-EB4).